The chain runs to 160 residues: SsrA-binding protein (160 aa).

The interval 132 to 160 (KIHDKRDDMQKKDAQQEIARALKSSNRYE) is disordered. Over residues 135–146 (DKRDDMQKKDAQ) the composition is skewed to basic and acidic residues.

It belongs to the SmpB family.

Its subcellular location is the cytoplasm. Its function is as follows. Required for rescue of stalled ribosomes mediated by trans-translation. Binds to transfer-messenger RNA (tmRNA), required for stable association of tmRNA with ribosomes. tmRNA and SmpB together mimic tRNA shape, replacing the anticodon stem-loop with SmpB. tmRNA is encoded by the ssrA gene; the 2 termini fold to resemble tRNA(Ala) and it encodes a 'tag peptide', a short internal open reading frame. During trans-translation Ala-aminoacylated tmRNA acts like a tRNA, entering the A-site of stalled ribosomes, displacing the stalled mRNA. The ribosome then switches to translate the ORF on the tmRNA; the nascent peptide is terminated with the 'tag peptide' encoded by the tmRNA and targeted for degradation. The ribosome is freed to recommence translation, which seems to be the essential function of trans-translation. This chain is SsrA-binding protein, found in Leptospira borgpetersenii serovar Hardjo-bovis (strain JB197).